A 293-amino-acid chain; its full sequence is DOMON domain-containing protein FRRS1L (293 aa).

A signal peptide spans 1-28; the sequence is MAGQPLRRPAWVPLLLRLLLAGIAACDA. Residues 29–60 are disordered; that stretch reads SPADDSAGPGGRGPRGRARGDAGADEAVPRHD. Over residues 46–60 the composition is skewed to basic and acidic residues; sequence ARGDAGADEAVPRHD. In terms of domain architecture, DOMON spans 119 to 234; it reads CDYFLSYRMI…WYYLFAWGPA (116 aa). A helical transmembrane segment spans residues 271-291; the sequence is TFSSPFCLLLIVALTFYLLMG.

In terms of assembly, component of the outer core of AMPAR complex. AMPAR complex consists of an inner core made of 4 pore-forming GluA/GRIA proteins (GRIA1, GRIA2, GRIA3 and GRIA4) and 4 major auxiliary subunits arranged in a twofold symmetry. One of the two pairs of distinct binding sites is occupied either by CNIH2, CNIH3 or CACNG2, CACNG3. The other harbors CACNG2, CACNG3, CACNG4, CACNG8 or GSG1L. This inner core of AMPAR complex is complemented by outer core constituents binding directly to the GluA/GRIA proteins at sites distinct from the interaction sites of the inner core constituents. Outer core constituents include at least PRRT1, PRRT2, CKAMP44/SHISA9, FRRS1L and NRN1. The proteins of the inner and outer core serve as a platform for other, more peripherally associated AMPAR constituents. Alone or in combination, these auxiliary subunits control the gating and pharmacology of the AMPAR complex and profoundly impact their biogenesis and protein processing. As to expression, expressed in the brain (at protein level). In embryos expression is evident in the ventral forebrain, but a lower level is seen in the remainder of the embryos. In the adult brain, expressed in the cortex, cerebellum, hippocampus and basal ganglia.

The protein localises to the cell membrane. Its subcellular location is the synapse. In terms of biological role, important modulator of glutamate signaling pathway. This Mus musculus (Mouse) protein is DOMON domain-containing protein FRRS1L (Frrs1l).